Here is a 39-residue protein sequence, read N- to C-terminus: Photosystem II reaction center protein X (39 aa).

The chain crosses the membrane as a helical span at residues 11–31 (SLLWGAIVVVIPLSAALLFIS).

Belongs to the PsbX family. Type 1 subfamily. In terms of assembly, PSII is composed of 1 copy each of membrane proteins PsbA, PsbB, PsbC, PsbD, PsbE, PsbF, PsbH, PsbI, PsbJ, PsbK, PsbL, PsbM, PsbT, PsbX, PsbY, PsbZ, Psb30/Ycf12, at least 3 peripheral proteins of the oxygen-evolving complex and a large number of cofactors. It forms dimeric complexes.

It localises to the plastid. The protein resides in the cyanelle thylakoid membrane. Its function is as follows. Involved in the binding and/or turnover of quinones at the Q(B) site of photosystem II (PSII). PSII is a light-driven water plastoquinone oxidoreductase, using light energy to abstract electrons from H(2)O, generating a proton gradient subsequently used for ATP formation. In Cyanophora paradoxa, this protein is Photosystem II reaction center protein X.